Reading from the N-terminus, the 148-residue chain is HTH-type transcriptional regulator Rv2324 (148 aa).

One can recognise an HTH asnC-type domain in the interval 4-65; sequence LDDTDERILA…VVDRNALGWN (62 aa). The H-T-H motif DNA-binding region spans 23–42; the sequence is FAEIGHKVSLSAPAVKRRVD.

Homodimer. Forms oligomers.

With respect to regulation, the DNA-binding activity of Rv2324 is modulated by interaction of Rv2324 with amino acids. Aspartate is the only effector amino acid that completely abolishes DNA binding. The majority of amino acids induce a dimer-tetramer or dimer-hexamer oligomeric transition. In response to amino-acid binding, adopts an open quaternary association, which is a part of the functional requirement to bind to non-symmetrically distributed target DNA binding sites. Transcriptional regulator involved in growth, DNA replication and damage control. Plays a crucial role in regulating survival and growth of M.tuberculosis. Could function as a global regulator in both the latent/persistent and active phases of growth. Binds to its own promoter region and to promoters of multiple metabolic genes, such as serB2, lat, ald and roc operon. In vitro, interacts with intrinsically curved and non-curved DNA molecules, and with both supercoiled and linear DNA, with higher affinity for supercoiled DNA. Binds to DNA recombination, replication and repair intermediates. The chain is HTH-type transcriptional regulator Rv2324 from Mycobacterium tuberculosis (strain ATCC 25618 / H37Rv).